A 171-amino-acid polypeptide reads, in one-letter code: Siroheme decarboxylase NirH subunit (171 aa).

The protein belongs to the Ahb/Nir family. Probably forms a complex composed of NirD, NirL, NirG and NirH. All proteins are required for the total conversion of siroheme to didecarboxysiroheme.

It catalyses the reaction siroheme + 2 H(+) = 12,18-didecarboxysiroheme + 2 CO2. It functions in the pathway porphyrin-containing compound metabolism. Functionally, involved in heme d1 biosynthesis. Catalyzes the decarboxylation of siroheme into didecarboxysiroheme. This chain is Siroheme decarboxylase NirH subunit, found in Pseudomonas aeruginosa (strain ATCC 15692 / DSM 22644 / CIP 104116 / JCM 14847 / LMG 12228 / 1C / PRS 101 / PAO1).